A 145-amino-acid polypeptide reads, in one-letter code: uncharacterized protein (145 aa).

The first 29 residues, Met-1–Ala-29, serve as a signal peptide directing secretion. The stretch at Lys-67–Leu-101 forms a coiled coil.

This is an uncharacterized protein from Bacillus subtilis (strain 168).